The sequence spans 231 residues: AA9 family lytic polysaccharide monooxygenase F (231 aa).

The first 17 residues, Met1–Ala17, serve as a signal peptide directing secretion. His18, Asp50, and His89 together coordinate Cu(2+). Asp50 is a binding site for O2. Intrachain disulfides connect Cys59/Cys177 and Cys147/Cys231. O2 contacts are provided by His163 and Gln172. Tyr174 serves as a coordination point for Cu(2+).

It belongs to the polysaccharide monooxygenase AA9 family. It depends on Cu(2+) as a cofactor.

Its subcellular location is the secreted. The catalysed reaction is [(1-&gt;4)-beta-D-glucosyl]n+m + reduced acceptor + O2 = 4-dehydro-beta-D-glucosyl-[(1-&gt;4)-beta-D-glucosyl]n-1 + [(1-&gt;4)-beta-D-glucosyl]m + acceptor + H2O.. Its function is as follows. Lytic polysaccharide monooxygenase (LPMO) that depolymerizes crystalline and amorphous polysaccharides via the oxidation of scissile alpha- or beta-(1-4)-glycosidic bonds, yielding C1 oxidation products. Catalysis by LPMOs requires the reduction of the active-site copper from Cu(II) to Cu(I) by a reducing agent and H(2)O(2) or O(2) as a cosubstrate. The sequence is that of AA9 family lytic polysaccharide monooxygenase F (gh61-6) from Neurospora crassa (strain ATCC 24698 / 74-OR23-1A / CBS 708.71 / DSM 1257 / FGSC 987).